A 466-amino-acid chain; its full sequence is Vimentin (466 aa).

Over residues 1-13 (MSTRSVSSSSYRR) the composition is skewed to low complexity. The tract at residues 1–31 (MSTRSVSSSSYRRMFGGPGTASRPSSTRSYV) is disordered. An N-acetylserine modification is found at Ser-2. The head stretch occupies residues 2-95 (STRSVSSSSY…FSLADAINTE (94 aa)). At Ser-5 the chain carries Phosphoserine. At Ser-7 the chain carries Phosphoserine; by PKA and PKC; alternate. An O-linked (GlcNAc) serine; alternate glycan is attached at Ser-7. A Phosphoserine modification is found at Ser-8. Phosphoserine; by PKC occurs at positions 9 and 10. The residue at position 20 (Thr-20) is a Phosphothreonine. Position 25 is a phosphoserine; by PKA and PKC (Ser-25). At Ser-26 the chain carries Phosphoserine; by PKC. The O-linked (GlcNAc) threonine glycan is linked to Thr-33. O-linked (GlcNAc) serine; alternate glycosylation occurs at Ser-34. Ser-34 bears the Phosphoserine; by PKC; alternate mark. Ser-39 carries the phosphoserine; by CaMK2, PKA, PKC and ROCK2 modification. A Phosphoserine; by PKC modification is found at Ser-42. Ser-49 carries the phosphoserine modification. A Phosphotyrosine modification is found at Tyr-53. The residue at position 55 (Ser-55) is a Phosphoserine. Ser-56 is modified (phosphoserine; by CDK5 and CDK1). Position 61 is a phosphotyrosine (Tyr-61). Ser-66 is subject to Phosphoserine; by PKA and PKC. Ser-72 carries the post-translational modification Phosphoserine; by AURKB and ROCK2. Ser-83 bears the Phosphoserine; by CaMK2 mark. Ser-87 carries the post-translational modification Phosphoserine. Residues 96 to 131 (FKNTRTNEKVELQELNDRFANYIDKVRFLEQQNKIL) form a coil 1A region. Residues 96–131 (FKNTRTNEKVELQELNDRFANYIDKVRFLEQQNKIL) are a coiled coil. One can recognise an IF rod domain in the interval 103 to 411 (EKVELQELND…KLLEGEESRI (309 aa)). Lys-104 participates in a covalent cross-link: Glycyl lysine isopeptide (Lys-Gly) (interchain with G-Cter in SUMO2). A Phosphotyrosine modification is found at Tyr-117. N6-acetyllysine; alternate occurs at positions 120, 129, and 139. N6-succinyllysine; alternate is present on residues Lys-120 and Lys-129. Residues Lys-120, Lys-129, and Lys-139 each participate in a glycyl lysine isopeptide (Lys-Gly) (interchain with G-Cter in SUMO2); alternate cross-link. Residues 132–153 (LAELEQLKGQGKSRLGDLYEEE) are linker 1. Ser-144 is modified (phosphoserine). Positions 154 to 245 (MRELRRQVDQ…KLHDEEIQEL (92 aa)) form a coiled coil. Residues 154–245 (MRELRRQVDQ…KLHDEEIQEL (92 aa)) form a coil 1B region. Lys-168 carries the N6-acetyllysine modification. At Lys-188 the chain carries N6-acetyllysine; alternate. Lys-188 carries the post-translational modification N6-succinyllysine; alternate. The residue at position 214 (Ser-214) is a Phosphoserine. N6-acetyllysine; alternate is present on Lys-223. Residue Lys-223 forms a Glycyl lysine isopeptide (Lys-Gly) (interchain with G-Cter in SUMO2); alternate linkage. Ser-226 is subject to Phosphoserine. Lys-235 is modified (N6-acetyllysine). The tract at residues 246 to 268 (QAQIQEQHVQIDMDVSKPDLTAA) is linker 12. A Glycyl lysine isopeptide (Lys-Gly) (interchain with G-Cter in SUMO2) cross-link involves residue Lys-262. Positions 269 to 407 (LRDVRQQYES…ATYRKLLEGE (139 aa)) are coil 2. At Lys-294 the chain carries N6-acetyllysine; alternate. The residue at position 294 (Lys-294) is an N6-succinyllysine; alternate. A Glycyl lysine isopeptide (Lys-Gly) (interchain with G-Cter in SUMO2); alternate cross-link involves residue Lys-294. Position 299 is a phosphoserine (Ser-299). Residues 303–407 (NRNNDALRQA…ATYRKLLEGE (105 aa)) are a coiled coil. Lys-313 is covalently cross-linked (Glycyl lysine isopeptide (Lys-Gly) (interchain with G-Cter in SUMO2)). A [IL]-x-C-x-x-[DE] motif motif is present at residues 326 to 329 (LTCE). Lys-373 carries the N6-acetyllysine; alternate modification. A Glycyl lysine isopeptide (Lys-Gly) (interchain with G-Cter in SUMO2); alternate cross-link involves residue Lys-373. The segment at 408-466 (ESRISLPLPNFSSLNLRETNLDSLPLVDTHSKRTLLIKTVETRDGQVINETSQHHDDLE) is tail. 4 positions are modified to phosphoserine: Ser-409, Ser-412, Ser-419, and Ser-420. Thr-426 carries the phosphothreonine modification. Position 430 is a phosphoserine (Ser-430). Phosphothreonine is present on Thr-436. Phosphoserine is present on Ser-438. Lys-439 participates in a covalent cross-link: Glycyl lysine isopeptide (Lys-Gly) (interchain with G-Cter in SUMO2). An N6-acetyllysine; alternate modification is found at Lys-445. Lys-445 is modified (N6-succinyllysine; alternate). Lys-445 is covalently cross-linked (Glycyl lysine isopeptide (Lys-Gly) (interchain with G-Cter in SUMO2); alternate). A Glycyl lysine isopeptide (Lys-Gly) (interchain with G-Cter in SUMO1); alternate cross-link involves residue Lys-445. 2 positions are modified to phosphothreonine: Thr-446 and Thr-458. Ser-459 carries the post-translational modification Phosphoserine.

It belongs to the intermediate filament family. Homomer assembled from elementary dimers. Identified in complexes that contain VIM, EZR, AHNAK, BFSP1, BFSP2, ANK2, PLEC, PRX and spectrin. Interacts with BCAS3. Interacts with LGSN. Interacts with SYNM. Interacts (via rod region) with PLEC (via CH 1 domain). Interacts with STK33. Interacts with LARP6. Interacts with RAB8B. Interacts with TOR1A; the interaction associates TOR1A with the cytoskeleton. Interacts with TOR1AIP1. Interacts with TOR1AIP1. Interacts with DIAPH1. Interacts with EPPK1; interaction is dependent of higher-order structure of intermediate filament. Interacts with the non-receptor tyrosine kinase SRMS; the interaction leads to phosphorylation of VIM. Interacts with NOD2. Interacts (via head region) with CORO1C. Interacts with HDGF. Interacts with PRKCE (via phorbol-ester/DAG-type 2 domain). Interacts with BFSP2. Interacts with PPL. Interacts with PKP1 and PKP2. Interacts with SCRIB (via PDZ domains); the interaction protects SCRIB from proteasomal degradation and facilitates SCRIB localization to intermediate filaments, the interaction is reduced by cell contact inhibition. In terms of processing, one of the most prominent phosphoproteins in various cells of mesenchymal origin. Phosphorylation is enhanced during cell division, at which time vimentin filaments are significantly reorganized. Phosphorylation by PKN1 inhibits the formation of filaments. Filament disassembly during mitosis is promoted by phosphorylation at Ser-55 as well as by nestin. Phosphorylated at Ser-56 by CDK5 during neutrophil secretion in the cytoplasm. Phosphorylated by STK33. Phosphorylated on tyrosine residues by SRMS. Post-translationally, S-nitrosylation is induced by interferon-gamma and oxidatively-modified low-densitity lipoprotein (LDL(ox)) possibly implicating the iNOS-S100A8/9 transnitrosylase complex.

It is found in the cytoplasm. It localises to the cytoskeleton. The protein resides in the nucleus matrix. The protein localises to the cell membrane. Functionally, vimentins are class-III intermediate filaments found in various non-epithelial cells, especially mesenchymal cells. Vimentin is attached to the nucleus, endoplasmic reticulum, and mitochondria, either laterally or terminally. Plays a role in cell directional movement, orientation, cell sheet organization and Golgi complex polarization at the cell migration front. Protects SCRIB from proteasomal degradation and facilitates its localization to intermediate filaments in a cell contact-mediated manner. Involved with LARP6 in the stabilization of type I collagen mRNAs for CO1A1 and CO1A2. This chain is Vimentin (VIM), found in Bos taurus (Bovine).